A 393-amino-acid polypeptide reads, in one-letter code: Elongation factor Tu (393 aa).

Positions 10–203 (KPHVNIGTIG…AVDNYIPEPV (194 aa)) constitute a tr-type G domain. Residues 19-26 (GHVDHGKT) are G1. 19 to 26 (GHVDHGKT) contacts GTP. Threonine 26 is a Mg(2+) binding site. The tract at residues 60 to 64 (GITIS) is G2. The G3 stretch occupies residues 81–84 (DCPG). Residues 81–85 (DCPGH) and 136–139 (NKVD) each bind GTP. The interval 136 to 139 (NKVD) is G4. Positions 173-175 (SAL) are G5.

Belongs to the TRAFAC class translation factor GTPase superfamily. Classic translation factor GTPase family. EF-Tu/EF-1A subfamily. In terms of assembly, monomer.

The protein localises to the cytoplasm. The enzyme catalyses GTP + H2O = GDP + phosphate + H(+). Its function is as follows. GTP hydrolase that promotes the GTP-dependent binding of aminoacyl-tRNA to the A-site of ribosomes during protein biosynthesis. This Chlorobium phaeovibrioides (strain DSM 265 / 1930) (Prosthecochloris vibrioformis (strain DSM 265)) protein is Elongation factor Tu.